Reading from the N-terminus, the 734-residue chain is Photosystem I P700 chlorophyll a apoprotein A2 (734 aa).

Helical transmembrane passes span 46–69, 135–158, 175–199, 273–291, 330–353, 369–395, 417–439, and 517–535; these read IFAS…FHVA, LYTG…FHLQ, LDHH…HVAI, IAHH…GHMY, LHFQ…QHMY, AALY…IFFI, AIIS…LYVH, and FLVH…LILV. The [4Fe-4S] cluster site is built by Cys559 and Cys568. Helical transmembrane passes span 575-596 and 643-665; these read AFYL…YWHW and LSVW…MFLI. Residues His654, Met662, and Tyr670 each contribute to the chlorophyll a site. Position 671 (Trp671) interacts with phylloquinone. Residues 707 to 727 traverse the membrane as a helical segment; that stretch reads LVGLAHFSVGYIFTYAAFLIA.

The protein belongs to the PsaA/PsaB family. The PsaA/B heterodimer binds the P700 chlorophyll special pair and subsequent electron acceptors. PSI consists of a core antenna complex that captures photons, and an electron transfer chain that converts photonic excitation into a charge separation. The eukaryotic PSI reaction center is composed of at least 11 subunits. P700 is a chlorophyll a/chlorophyll a' dimer, A0 is one or more chlorophyll a, A1 is one or both phylloquinones and FX is a shared 4Fe-4S iron-sulfur center. is required as a cofactor.

It is found in the plastid. The protein localises to the chloroplast thylakoid membrane. It carries out the reaction reduced [plastocyanin] + hnu + oxidized [2Fe-2S]-[ferredoxin] = oxidized [plastocyanin] + reduced [2Fe-2S]-[ferredoxin]. PsaA and PsaB bind P700, the primary electron donor of photosystem I (PSI), as well as the electron acceptors A0, A1 and FX. PSI is a plastocyanin-ferredoxin oxidoreductase, converting photonic excitation into a charge separation, which transfers an electron from the donor P700 chlorophyll pair to the spectroscopically characterized acceptors A0, A1, FX, FA and FB in turn. Oxidized P700 is reduced on the lumenal side of the thylakoid membrane by plastocyanin. This Cycas taitungensis (Prince sago) protein is Photosystem I P700 chlorophyll a apoprotein A2.